Consider the following 487-residue polypeptide: Glutamyl-tRNA(Gln) amidotransferase subunit A (487 aa).

Catalysis depends on charge relay system residues Lys74 and Ser149. Ser173 functions as the Acyl-ester intermediate in the catalytic mechanism.

It belongs to the amidase family. GatA subfamily. In terms of assembly, heterotrimer of A, B and C subunits.

It carries out the reaction L-glutamyl-tRNA(Gln) + L-glutamine + ATP + H2O = L-glutaminyl-tRNA(Gln) + L-glutamate + ADP + phosphate + H(+). Functionally, allows the formation of correctly charged Gln-tRNA(Gln) through the transamidation of misacylated Glu-tRNA(Gln) in organisms which lack glutaminyl-tRNA synthetase. The reaction takes place in the presence of glutamine and ATP through an activated gamma-phospho-Glu-tRNA(Gln). This is Glutamyl-tRNA(Gln) amidotransferase subunit A from Prochlorococcus marinus (strain MIT 9211).